A 130-amino-acid polypeptide reads, in one-letter code: uncharacterized protein (130 aa).

Positions 1–23 (MINRKVVYALSALLLFVYSYAFI) are cleaved as a signal peptide.

This is an uncharacterized protein from Aquifex aeolicus (strain VF5).